Reading from the N-terminus, the 715-residue chain is Fatty acid oxidation complex subunit alpha (715 aa).

The tract at residues 1–190 is enoyl-CoA hydratase/isomerase; sequence MIYEGKAITV…KVGAVDAVVA (190 aa). Substrate is bound at residue aspartate 297. The 3-hydroxyacyl-CoA dehydrogenase stretch occupies residues 312 to 715; that stretch reads RDVKQAAVLG…MAKNGQSFFG (404 aa). NAD(+) is bound by residues methionine 325, aspartate 344, 401-403, lysine 408, and serine 430; that span reads VVE. The active-site For 3-hydroxyacyl-CoA dehydrogenase activity is histidine 451. NAD(+) is bound at residue asparagine 454. Substrate-binding residues include asparagine 501 and tyrosine 660.

In the N-terminal section; belongs to the enoyl-CoA hydratase/isomerase family. The protein in the C-terminal section; belongs to the 3-hydroxyacyl-CoA dehydrogenase family. As to quaternary structure, heterotetramer of two alpha chains (FadB) and two beta chains (FadA).

It catalyses the reaction a (3S)-3-hydroxyacyl-CoA + NAD(+) = a 3-oxoacyl-CoA + NADH + H(+). The enzyme catalyses a (3S)-3-hydroxyacyl-CoA = a (2E)-enoyl-CoA + H2O. It carries out the reaction a 4-saturated-(3S)-3-hydroxyacyl-CoA = a (3E)-enoyl-CoA + H2O. The catalysed reaction is (3S)-3-hydroxybutanoyl-CoA = (3R)-3-hydroxybutanoyl-CoA. It catalyses the reaction a (3Z)-enoyl-CoA = a 4-saturated (2E)-enoyl-CoA. The enzyme catalyses a (3E)-enoyl-CoA = a 4-saturated (2E)-enoyl-CoA. It participates in lipid metabolism; fatty acid beta-oxidation. Its function is as follows. Involved in the aerobic and anaerobic degradation of long-chain fatty acids via beta-oxidation cycle. Catalyzes the formation of 3-oxoacyl-CoA from enoyl-CoA via L-3-hydroxyacyl-CoA. It can also use D-3-hydroxyacyl-CoA and cis-3-enoyl-CoA as substrate. The polypeptide is Fatty acid oxidation complex subunit alpha (Pseudomonas fluorescens (strain SBW25)).